The sequence spans 652 residues: Replication protein E1 (652 aa).

The Nuclear localization signal motif lies at 86–88 (KRK). Serine 92 is modified (phosphoserine; by host). The segment at 153-173 (NNTNGEEEGENGGENGGSIRE) is disordered. Residues 188-354 (DPQSPTAQLK…LTVIQHGIDD (167 aa)) form a DNA-binding region region. In terms of domain architecture, SF3 helicase spans 453–603 (VEFITFLCAF…FPFDQNRNPV (151 aa)). 479–486 (GPPNTGKS) contacts ATP. A Glycyl lysine isopeptide (Lys-Gly) (interchain with G-Cter in SUMO) cross-link involves residue lysine 560.

Belongs to the papillomaviridae E1 protein family. As to quaternary structure, can form hexamers. Interacts with E2 protein; this interaction increases E1 DNA binding specificity. Interacts with host DNA polymerase subunit POLA2. Interacts with host single stranded DNA-binding protein RPA1. Interacts with host TOP1; this interaction stimulates the enzymatic activity of TOP1. Post-translationally, phosphorylated. Sumoylated.

It localises to the host nucleus. The enzyme catalyses Couples ATP hydrolysis with the unwinding of duplex DNA by translocating in the 3'-5' direction.. The catalysed reaction is ATP + H2O = ADP + phosphate + H(+). In terms of biological role, ATP-dependent DNA 3'-5' helicase required for initiation of viral DNA replication. It forms a complex with the viral E2 protein. The E1-E2 complex binds to the replication origin which contains binding sites for both proteins. During the initial step, a dimer of E1 interacts with a dimer of protein E2 leading to a complex that binds the viral origin of replication with high specificity. Then, a second dimer of E1 displaces the E2 dimer in an ATP-dependent manner to form the E1 tetramer. Following this, two E1 monomers are added to each half of the site, which results in the formation of two E1 trimers on the viral ori. Subsequently, two hexamers will be created. The double hexamer acts as a bi-directional helicase machinery and unwinds the viral DNA and then recruits the host DNA polymerase to start replication. This Human papillomavirus type 70 protein is Replication protein E1.